The following is a 473-amino-acid chain: Cysteine--tRNA ligase (473 aa).

Zn(2+) is bound at residue Cys28. The 'HIGH' region signature appears at 30–40 (VTVYDLCHLGH). Residues Cys213, His238, and Glu242 each coordinate Zn(2+). Positions 270-274 (KMSKS) match the 'KMSKS' region motif. Lys273 contributes to the ATP binding site.

This sequence belongs to the class-I aminoacyl-tRNA synthetase family. Monomer. Zn(2+) serves as cofactor.

Its subcellular location is the cytoplasm. It carries out the reaction tRNA(Cys) + L-cysteine + ATP = L-cysteinyl-tRNA(Cys) + AMP + diphosphate. This is Cysteine--tRNA ligase from Blochmanniella pennsylvanica (strain BPEN).